Here is a 218-residue protein sequence, read N- to C-terminus: Probable GTP-binding protein EngB (218 aa).

Residues D44 to T218 form the EngB-type G domain. GTP is bound by residues G52–S59, G79–E83, D97–G100, T164–D167, and T198–S200. Mg(2+) contacts are provided by S59 and T81.

It belongs to the TRAFAC class TrmE-Era-EngA-EngB-Septin-like GTPase superfamily. EngB GTPase family. Mg(2+) serves as cofactor.

Necessary for normal cell division and for the maintenance of normal septation. The protein is Probable GTP-binding protein EngB of Jannaschia sp. (strain CCS1).